Here is a 160-residue protein sequence, read N- to C-terminus: Photosystem II extrinsic protein V (160 aa).

The first 25 residues, 1–25, serve as a signal peptide directing secretion; that stretch reads MKRFILLAIATVFFFCQFQTNPVNA. Heme c contacts are provided by cysteine 62, cysteine 65, histidine 66, and histidine 117.

The protein belongs to the cytochrome c family. PsbV subfamily. As to quaternary structure, PSII is composed of 1 copy each of membrane proteins PsbA, PsbB, PsbC, PsbD, PsbE, PsbF, PsbH, PsbI, PsbJ, PsbK, PsbL, PsbM, PsbT, PsbX, PsbY, PsbZ, Psb30/Ycf12, peripheral proteins PsbO, CyanoQ (PsbQ), PsbU, PsbV and a large number of cofactors. It forms dimeric complexes. It depends on heme c as a cofactor.

Its subcellular location is the cellular thylakoid membrane. Functionally, one of the extrinsic, lumenal subunits of photosystem II (PSII). PSII is a light-driven water plastoquinone oxidoreductase, using light energy to abstract electrons from H(2)O, generating a proton gradient subsequently used for ATP formation. The extrinsic proteins stabilize the structure of photosystem II oxygen-evolving complex (OEC), the ion environment of oxygen evolution and protect the OEC against heat-induced inactivation. Low-potential cytochrome c that plays a role in the OEC of PSII. In Rippkaea orientalis (strain PCC 8801 / RF-1) (Cyanothece sp. (strain PCC 8801)), this protein is Photosystem II extrinsic protein V.